Consider the following 165-residue polypeptide: E3 ubiquitin-protein ligase RNF181 (165 aa).

An RING-type; atypical zinc finger spans residues 88-129 (CPVCLLEFEAEETVIEMPCHHLFHSNCILPWLSKTNSCPLCR). Residues 136–165 (DDSYEEHKKDKARRQQQQHRLENLHGAMYT) form a disordered region. Thr165 is modified (phosphothreonine).

Belongs to the RNF181 family. In terms of assembly, directly interacts with ITGA2B and, as a result, with integrin ITGA2B/ITGB3. There is no evidence that integrin ITGA2B/ITGB3 is an endogenous substrate for RNF181-directed ubiquitination. In terms of processing, auto-ubiquitinated as part of the enzymatic reaction.

It carries out the reaction S-ubiquitinyl-[E2 ubiquitin-conjugating enzyme]-L-cysteine + [acceptor protein]-L-lysine = [E2 ubiquitin-conjugating enzyme]-L-cysteine + N(6)-ubiquitinyl-[acceptor protein]-L-lysine.. Its pathway is protein modification; protein ubiquitination. In terms of biological role, E3 ubiquitin-protein ligase which accepts ubiquitin from an E2 ubiquitin-conjugating enzyme in the form of a thioester and then directly transfers the ubiquitin to targeted substrates. Catalyzes monoubiquitination of 26S proteasome subunit PSMC2/RPT1. This Mus musculus (Mouse) protein is E3 ubiquitin-protein ligase RNF181.